Consider the following 462-residue polypeptide: Probable peptidoglycan glycosyltransferase FtsW (462 aa).

Residues 1 to 28 are disordered; that stretch reads MREPRHVPQLRASGRRFPQRGRRHRFGK. Residues 1-92 are Cytoplasmic-facing; it reads MREPRHVPQL…RSRMLDFDYS (92 aa). Over residues 13-27 the composition is skewed to basic residues; the sequence is SGRRFPQRGRRHRFG. A helical transmembrane segment spans residues 93–113; the sequence is LLWVSIALLGLGVVMVYSASI. Over 114–127 the chain is Periplasmic; the sequence is AMPDSPKYASYHDY. The helical transmembrane segment at 128–148 threads the bilayer; it reads AFLLRHCVSLVVAFVAAVIAF. Over 149-158 the chain is Cytoplasmic; the sequence is RVPVSTWDKY. The helical transmembrane segment at 159-179 threads the bilayer; the sequence is APHLFLIALVGLVIVLIPHIG. Topologically, residues 180–192 are periplasmic; it reads KGVNGARRWIPLG. The helical transmembrane segment at 193-215 threads the bilayer; it reads ITNMQPSEIMKLAVTIYAANYTV. Over 216 to 223 the chain is Cytoplasmic; it reads RKQEYMQS. Residues 224 to 244 form a helical membrane-spanning segment; the sequence is FAKGFLPMAFAVGLVGALLLL. The Periplasmic portion of the chain corresponds to 245-247; sequence EPD. A helical transmembrane segment spans residues 248 to 268; that stretch reads MGAFMVVAAIAMGVLFLGGVN. The Cytoplasmic segment spans residues 269 to 270; the sequence is GK. A helical transmembrane segment spans residues 271 to 291; it reads LFGGLVATAVGTFTMLVWLSP. The Periplasmic portion of the chain corresponds to 292–349; the sequence is WRRERIFAYLDPWDERYAQGKAYQLTHSLIAFGRGEWFGVGLGGSVEKLNYLPEAHTD. The helical transmembrane segment at 350–370 threads the bilayer; sequence FILAVIGEELGFVGVLVVILL. Topologically, residues 371–398 are cytoplasmic; it reads FYWIVRRSFEIGRQALALDRTFAGLMAK. Residues 399–419 form a helical membrane-spanning segment; that stretch reads GVGIWFGAQAFINMGVNLGLL. The Periplasmic segment spans residues 420–425; it reads PTKGLT. Residues 426 to 446 traverse the membrane as a helical segment; the sequence is LPLVSYGGSGILLNCISLAVL. The Cytoplasmic segment spans residues 447–462; sequence LRVDYENRVLMRGGKV.

The protein belongs to the SEDS family. FtsW subfamily.

It is found in the cell inner membrane. The enzyme catalyses [GlcNAc-(1-&gt;4)-Mur2Ac(oyl-L-Ala-gamma-D-Glu-L-Lys-D-Ala-D-Ala)](n)-di-trans,octa-cis-undecaprenyl diphosphate + beta-D-GlcNAc-(1-&gt;4)-Mur2Ac(oyl-L-Ala-gamma-D-Glu-L-Lys-D-Ala-D-Ala)-di-trans,octa-cis-undecaprenyl diphosphate = [GlcNAc-(1-&gt;4)-Mur2Ac(oyl-L-Ala-gamma-D-Glu-L-Lys-D-Ala-D-Ala)](n+1)-di-trans,octa-cis-undecaprenyl diphosphate + di-trans,octa-cis-undecaprenyl diphosphate + H(+). The protein operates within cell wall biogenesis; peptidoglycan biosynthesis. Its function is as follows. Peptidoglycan polymerase that is essential for cell division. In Burkholderia thailandensis (strain ATCC 700388 / DSM 13276 / CCUG 48851 / CIP 106301 / E264), this protein is Probable peptidoglycan glycosyltransferase FtsW.